Consider the following 70-residue polypeptide: Guanine nucleotide-binding protein subunit gamma-1 (70 aa).

Residue C67 is modified to Cysteine methyl ester. A lipid anchor (S-geranylgeranyl cysteine) is attached at C67. A propeptide spans 68 to 70 (removed in mature form); that stretch reads TVL.

Belongs to the G protein gamma family. In terms of assembly, g proteins are composed of 3 units, alpha, beta and gamma. Predominantly expressed in the central nervous system.

The protein localises to the cell membrane. Guanine nucleotide-binding proteins (G proteins) are involved as a modulator or transducer in various transmembrane signaling systems. The beta and gamma chains are required for the GTPase activity, for replacement of GDP by GTP, and for G protein-effector interaction. The chain is Guanine nucleotide-binding protein subunit gamma-1 (Ggamma1) from Drosophila melanogaster (Fruit fly).